The primary structure comprises 495 residues: Phosphomethylpyrimidine synthase (495 aa).

Residues Asn-125, Met-154, Tyr-183, His-219, 239 to 241 (SRG), 280 to 283 (DGLR), and Glu-319 each bind substrate. Residue His-323 participates in Zn(2+) binding. Residue Tyr-346 participates in substrate binding. His-387 provides a ligand contact to Zn(2+). Cys-467, Cys-470, and Cys-475 together coordinate [4Fe-4S] cluster.

The protein belongs to the ThiC family. It depends on [4Fe-4S] cluster as a cofactor.

The catalysed reaction is 5-amino-1-(5-phospho-beta-D-ribosyl)imidazole + S-adenosyl-L-methionine = 4-amino-2-methyl-5-(phosphooxymethyl)pyrimidine + CO + 5'-deoxyadenosine + formate + L-methionine + 3 H(+). It functions in the pathway cofactor biosynthesis; thiamine diphosphate biosynthesis. Catalyzes the synthesis of the hydroxymethylpyrimidine phosphate (HMP-P) moiety of thiamine from aminoimidazole ribotide (AIR) in a radical S-adenosyl-L-methionine (SAM)-dependent reaction. This is Phosphomethylpyrimidine synthase from Leptospira interrogans serogroup Icterohaemorrhagiae serovar copenhageni (strain Fiocruz L1-130).